Consider the following 863-residue polypeptide: Paramyosin (863 aa).

The segment at 1–18 (MSESHVKISRTIIRGTSP) is nonhelical region. A coiled-coil region spans residues 19–836 (STVRLESRVR…ERTITIKRTI (818 aa)). The tract at residues 837–863 (GGPGSRAVSVVREINSVSRGNRATSIM) is nonhelical region.

The protein belongs to the paramyosin family. Homodimer.

It is found in the cytoplasm. It localises to the myofibril. Functionally, paramyosin is a major structural component of many thick filaments isolated from invertebrate muscles. In Taenia saginata (Beef tapeworm), this protein is Paramyosin (PMY).